The chain runs to 255 residues: Small ribosomal subunit protein eS1B (255 aa).

A2 carries the N-acetylalanine; partial modification. The residue at position 245 (S245) is a Phosphoserine. Residue K248 forms a Glycyl lysine isopeptide (Lys-Gly) (interchain with G-Cter in ubiquitin) linkage. A Phosphothreonine modification is found at T254.

Belongs to the eukaryotic ribosomal protein eS1 family. As to quaternary structure, component of the small ribosomal subunit. Mature ribosomes consist of a small (40S) and a large (60S) subunit. The 40S subunit contains about 33 different proteins and 1 molecule of RNA (18S). The 60S subunit contains about 49 different proteins and 3 molecules of RNA (25S, 5.8S and 5S).

The protein localises to the cytoplasm. The chain is Small ribosomal subunit protein eS1B from Saccharomyces cerevisiae (strain JAY291) (Baker's yeast).